The following is a 132-amino-acid chain: Heat shock protein 15 homolog (132 aa).

An S4 RNA-binding domain is found at valine 11 to valine 73. 2 stretches are compositionally biased toward basic and acidic residues: residues leucine 94 to arginine 105 and proline 114 to glutamine 125. A disordered region spans residues leucine 94–tyrosine 132.

Belongs to the HSP15 family.

Functionally, may play an important role in binding of nucleic acid. More specific for RNA. In Aeromonas salmonicida, this protein is Heat shock protein 15 homolog (hslR).